Consider the following 159-residue polypeptide: Peptide deformylase (159 aa).

The Fe cation site is built by Cys88 and His130. Glu131 is a catalytic residue. Residue His134 coordinates Fe cation.

Belongs to the polypeptide deformylase family. The cofactor is Fe(2+).

The catalysed reaction is N-terminal N-formyl-L-methionyl-[peptide] + H2O = N-terminal L-methionyl-[peptide] + formate. In terms of biological role, removes the formyl group from the N-terminal Met of newly synthesized proteins. Requires at least a dipeptide for an efficient rate of reaction. N-terminal L-methionine is a prerequisite for activity but the enzyme has broad specificity at other positions. This chain is Peptide deformylase, found in Thermoanaerobacter pseudethanolicus (strain ATCC 33223 / 39E) (Clostridium thermohydrosulfuricum).